The primary structure comprises 1120 residues: ISWI chromatin-remodeling complex ATPase ISW2 (1120 aa).

The segment covering 1–16 (MTTQQEEQRSDTKNSK) has biased composition (basic and acidic residues). 2 disordered regions span residues 1 to 58 (MTTQ…VEDR) and 129 to 153 (LSKS…EDAE). A phosphoserine mark is found at Ser-17 and Ser-19. Residues 47–58 (LSDKEIYTVEDR) are compositionally biased toward basic and acidic residues. The region spanning 196–361 (ISLHENKLSG…WALLNFLLPD (166 aa)) is the Helicase ATP-binding domain. 209-216 (DEMGLGKT) lines the ATP pocket. The short motif at 312–315 (DEAH) is the DEAH box element. A Helicase C-terminal domain is found at 494-645 (ILDKLLKRLK…QLVIQQGTGK (152 aa)). 2 disordered regions span residues 764 to 783 (GGGS…PRAP) and 828 to 853 (NEGS…KGHE). Ser-831 is modified (phosphoserine). The SANT domain occupies 886–938 (KAFTNWNKRDFMAFINACAKYGRDDMENIKKSIDSKTPEEVEVYAKIFWERLK). The segment at 1062–1120 (PDANKKKRSRTSATREDTPLSQNESTRASTVPNLPTTMVTNQKDTNDHVDKRTKIDQEA) is disordered. Phosphothreonine is present on Thr-1079. A compositionally biased stretch (polar residues) spans 1080–1104 (PLSQNESTRASTVPNLPTTMVTNQK). Ser-1082 is subject to Phosphoserine. A compositionally biased stretch (basic and acidic residues) spans 1105–1120 (DTNDHVDKRTKIDQEA).

This sequence belongs to the SNF2/RAD54 helicase family. ISWI subfamily. As to quaternary structure, component of the ISW2 complex, which at least consists of ISW2, ITC1, DLS1 and DPB4. May form a stable subcomplex with ITC1.

The protein resides in the nucleus. Its function is as follows. Catalytic component of the ISW2 complex, which acts in remodeling the chromatin by catalyzing an ATP-dependent alteration in the structure of nucleosomal DNA. The ISW2 complex is involved in coordinating transcriptional repression and in inheritance of telomeric silencing. It is involved in repression of MAT a-specific genes, INO1, and early meiotic genes during mitotic growth dependent upon transcription factor UME6 and in a parallel pathway to the RPD3-SIN3 histone deacetylase complex. The sequence is that of ISWI chromatin-remodeling complex ATPase ISW2 (ISW2) from Saccharomyces cerevisiae (strain ATCC 204508 / S288c) (Baker's yeast).